A 781-amino-acid chain; its full sequence is Ubiquitin carboxyl-terminal hydrolase 14 (781 aa).

The UBP-type zinc finger occupies Ser-169–Ile-279. 12 residues coordinate Zn(2+): Cys-171, His-173, Cys-192, Cys-195, Cys-204, Cys-207, Cys-212, His-224, His-228, His-235, Cys-253, and Cys-256. Positions Cys-323–Cys-781 constitute a USP domain. Cys-332 acts as the Nucleophile in catalysis. 2 consecutive UBA domains span residues Asp-576–His-626 and Glu-649–Asn-689. His-737 acts as the Proton acceptor in catalysis.

The protein belongs to the peptidase C19 family.

The protein localises to the cytoplasm. It is found in the nucleus. The catalysed reaction is Thiol-dependent hydrolysis of ester, thioester, amide, peptide and isopeptide bonds formed by the C-terminal Gly of ubiquitin (a 76-residue protein attached to proteins as an intracellular targeting signal).. Functionally, required for the adaptation to the presence of glucose in the growth medium; mediates the degradation of enzymes involved in gluconeogenesis when cells are shifted to glucose-containing medium. Required for proteasome-dependent catabolite degradation of fructose-1,6-bisphosphatase (FBP1). Accelerates proteasomal breakdown of ubiquitinated proteins as it disassembles free ubiquitin chains that would compete with ubiquitinated proteins to bind to the proteasome. This Saccharomyces cerevisiae (strain ATCC 204508 / S288c) (Baker's yeast) protein is Ubiquitin carboxyl-terminal hydrolase 14 (UBP14).